The following is a 287-amino-acid chain: ATP synthase gamma chain (287 aa).

It belongs to the ATPase gamma chain family. In terms of assembly, F-type ATPases have 2 components, CF(1) - the catalytic core - and CF(0) - the membrane proton channel. CF(1) has five subunits: alpha(3), beta(3), gamma(1), delta(1), epsilon(1). CF(0) has three main subunits: a, b and c.

Its subcellular location is the cell inner membrane. Functionally, produces ATP from ADP in the presence of a proton gradient across the membrane. The gamma chain is believed to be important in regulating ATPase activity and the flow of protons through the CF(0) complex. The protein is ATP synthase gamma chain of Hahella chejuensis (strain KCTC 2396).